A 431-amino-acid polypeptide reads, in one-letter code: Beta-1,4-glucuronyltransferase 1 (431 aa).

Topologically, residues Met-1 to Lys-11 are cytoplasmic. A helical membrane pass occupies residues Val-12–Ser-32. Topologically, residues Lys-33–Cys-431 are lumenal. Residue Asn-216 is glycosylated (N-linked (GlcNAc...) asparagine). Residues Asp-241 and Asp-243 each contribute to the Mn(2+) site. Asn-314 is a glycosylation site (N-linked (GlcNAc...) asparagine).

It belongs to the glycosyltransferase 49 family. Mn(2+) serves as cofactor.

It is found in the golgi apparatus membrane. The enzyme catalyses 3-O-[beta-D-Xyl-(1-&gt;4)-Rib-ol-P-Rib-ol-P-3-beta-D-GalNAc-(1-&gt;3)-beta-D-GlcNAc-(1-&gt;4)-(O-6-P-alpha-D-Man)]-Thr-[protein] + UDP-alpha-D-glucuronate = 3-O-[beta-D-GlcA-(1-&gt;3)-beta-D-Xyl-(1-&gt;4)-Rib-ol-P-Rib-ol-P-3-beta-D-GalNAc-(1-&gt;3)-beta-D-GlcNAc-(1-&gt;4)-(O-6-P-alpha-D-Man)]-Thr-[protein] + UDP + H(+). Its pathway is protein modification; protein glycosylation. In terms of biological role, beta-1,4-glucuronyltransferase involved in O-mannosylation of alpha-dystroglycan (DAG1). Transfers a glucuronic acid (GlcA) residue onto a xylose (Xyl) acceptor to produce the glucuronyl-beta-1,4-xylose-beta disaccharide primer, which is further elongated by LARGE, during synthesis of phosphorylated O-mannosyl glycan. Phosphorylated O-mannosyl glycan is a carbohydrate structure present in alpha-dystroglycan (DAG1), which is required for binding laminin G-like domain-containing extracellular proteins with high affinity. Required for axon guidance; via its function in O-mannosylation of alpha-dystroglycan (DAG1). The polypeptide is Beta-1,4-glucuronyltransferase 1 (Danio rerio (Zebrafish)).